The sequence spans 222 residues: Probable transaldolase (222 aa).

Catalysis depends on K91, which acts as the Schiff-base intermediate with substrate.

Belongs to the transaldolase family. Type 3B subfamily.

Its subcellular location is the cytoplasm. It carries out the reaction D-sedoheptulose 7-phosphate + D-glyceraldehyde 3-phosphate = D-erythrose 4-phosphate + beta-D-fructose 6-phosphate. It participates in carbohydrate degradation; pentose phosphate pathway; D-glyceraldehyde 3-phosphate and beta-D-fructose 6-phosphate from D-ribose 5-phosphate and D-xylulose 5-phosphate (non-oxidative stage): step 2/3. Its function is as follows. Transaldolase is important for the balance of metabolites in the pentose-phosphate pathway. The sequence is that of Probable transaldolase from Chlorobaculum tepidum (strain ATCC 49652 / DSM 12025 / NBRC 103806 / TLS) (Chlorobium tepidum).